The sequence spans 416 residues: Queuine tRNA-ribosyltransferase accessory subunit 2 (416 aa).

4 residues coordinate Zn(2+): C323, C325, C328, and H354.

The protein belongs to the queuine tRNA-ribosyltransferase family. QTRT2 subfamily. Heterodimer of a catalytic subunit and an accessory subunit. Zn(2+) is required as a cofactor.

It localises to the cytoplasm. Functionally, non-catalytic subunit of the queuine tRNA-ribosyltransferase (TGT) that catalyzes the base-exchange of a guanine (G) residue with queuine (Q) at position 34 (anticodon wobble position) in tRNAs with GU(N) anticodons (tRNA-Asp, -Asn, -His and -Tyr), resulting in the hypermodified nucleoside queuosine (7-(((4,5-cis-dihydroxy-2-cyclopenten-1-yl)amino)methyl)-7-deazaguanosine). This chain is Queuine tRNA-ribosyltransferase accessory subunit 2, found in Drosophila mojavensis (Fruit fly).